We begin with the raw amino-acid sequence, 380 residues long: Cytochrome b (380 aa).

Helical transmembrane passes span 34–54, 78–99, 114–134, and 179–199; these read FGSLLGICLLTQILTGLLLAT, WLIRNLHANGASFFFICIYLHI, WNTGVILLLALMATAFVGYVL, and FFALHFLLPFMIAGLALIHLT. Positions 84 and 98 each coordinate heme b. Heme b is bound by residues His183 and His197. An a ubiquinone-binding site is contributed by His202. A run of 4 helical transmembrane segments spans residues 227 to 247, 289 to 309, 321 to 341, and 348 to 368; these read LKDILGFIIMFLPLTTLALFS, LGGVLALAASVLVLFLAPLLH, FSQFLFWTLAANLFILTWVGS, and FIIIGQLASLTYFTILLLLFP.

It belongs to the cytochrome b family. In terms of assembly, the cytochrome bc1 complex contains 11 subunits: 3 respiratory subunits (MT-CYB, CYC1 and UQCRFS1), 2 core proteins (UQCRC1 and UQCRC2) and 6 low-molecular weight proteins (UQCRH/QCR6, UQCRB/QCR7, UQCRQ/QCR8, UQCR10/QCR9, UQCR11/QCR10 and a cleavage product of UQCRFS1). This cytochrome bc1 complex then forms a dimer. Requires heme b as cofactor.

It is found in the mitochondrion inner membrane. Component of the ubiquinol-cytochrome c reductase complex (complex III or cytochrome b-c1 complex) that is part of the mitochondrial respiratory chain. The b-c1 complex mediates electron transfer from ubiquinol to cytochrome c. Contributes to the generation of a proton gradient across the mitochondrial membrane that is then used for ATP synthesis. The chain is Cytochrome b (MT-CYB) from Alca torda (Razorbill).